A 293-amino-acid chain; its full sequence is Proteinase T (293 aa).

Positions 1–12 are excised as a propeptide; the sequence is EFIEQDAVVTIS. The 275-residue stretch at 19–293 folds into the Peptidase S8 domain; the sequence is PWGLARISSQ…VLINNGEGSA (275 aa). Disulfide bonds link C46–C137 and C192–C262. Residues D51, H83, and S238 each act as charge relay system in the active site.

Belongs to the peptidase S8 family.

Its function is as follows. Serine proteinase. In Parengyodontium album (Tritirachium album), this protein is Proteinase T (PROT).